The following is a 302-amino-acid chain: Probable alpha-L-glutamate ligase (302 aa).

The ATP-grasp domain maps to Leu104 to Glu287. ATP contacts are provided by residues Lys141, Glu178–Tyr179, Asp187, and Arg211–Asn213. The Mg(2+) site is built by Asp248, Glu260, and Asn262. Asp248, Glu260, and Asn262 together coordinate Mn(2+).

Belongs to the RimK family. Mg(2+) is required as a cofactor. It depends on Mn(2+) as a cofactor.

The protein is Probable alpha-L-glutamate ligase of Alcanivorax borkumensis (strain ATCC 700651 / DSM 11573 / NCIMB 13689 / SK2).